A 101-amino-acid polypeptide reads, in one-letter code: Protein SSXA1 (101 aa).

A KRAB-related domain is found at 19-83; that stretch reads ETCQAFEDIS…ERVTKSVLSD (65 aa). The tract at residues 73–101 is disordered; that stretch reads KERVTKSVLSDSDEVSSHESQDKRKNPVV. A compositionally biased stretch (basic and acidic residues) spans 87-101; that stretch reads VSSHESQDKRKNPVV.

The protein belongs to the SSX family. Specifically expressed in testis (at protein level). Not detected in other tissues tested (at protein level).

The protein localises to the nucleus. In terms of biological role, could act as a modulator of transcription. The protein is Protein SSXA1 of Mus musculus (Mouse).